The following is a 238-amino-acid chain: Probable transcriptional regulatory protein SPH_2064 (238 aa).

This sequence belongs to the TACO1 family. YeeN subfamily.

The protein localises to the cytoplasm. This chain is Probable transcriptional regulatory protein SPH_2064, found in Streptococcus pneumoniae (strain Hungary19A-6).